We begin with the raw amino-acid sequence, 250 residues long: Peroxiredoxin (250 aa).

One can recognise a Thioredoxin domain in the interval 6-163 (PLIGERFPEM…ILRIVKALKL (158 aa)). The active-site Cysteine sulfenic acid (-SOH) intermediate is C50. A substrate-binding site is contributed by R126. A disulfide bridge links C207 with C213.

Belongs to the peroxiredoxin family. Prx6 subfamily. As to quaternary structure, homodecamer. Pentamer of dimers that assemble into a ring structure.

It is found in the cytoplasm. It carries out the reaction a hydroperoxide + [thioredoxin]-dithiol = an alcohol + [thioredoxin]-disulfide + H2O. In terms of biological role, thiol-specific peroxidase that catalyzes the reduction of hydrogen peroxide and organic hydroperoxides to water and alcohols, respectively. Plays a role in cell protection against oxidative stress by detoxifying peroxides. In Aeropyrum pernix (strain ATCC 700893 / DSM 11879 / JCM 9820 / NBRC 100138 / K1), this protein is Peroxiredoxin.